The chain runs to 461 residues: Fumarate hydratase class II (461 aa).

Residues 97–99, 127–130, 137–139, and Thr185 contribute to the substrate site; these read SGT, HPND, and SSN. Residue His186 is the Proton donor/acceptor of the active site. Ser316 is a catalytic residue. Substrate contacts are provided by residues Ser317 and 322-324; that span reads KVN.

Belongs to the class-II fumarase/aspartase family. Fumarase subfamily. Homotetramer.

The protein localises to the cytoplasm. It carries out the reaction (S)-malate = fumarate + H2O. It functions in the pathway carbohydrate metabolism; tricarboxylic acid cycle; (S)-malate from fumarate: step 1/1. In terms of biological role, involved in the TCA cycle. Catalyzes the stereospecific interconversion of fumarate to L-malate. The polypeptide is Fumarate hydratase class II (Staphylococcus aureus (strain Mu50 / ATCC 700699)).